The sequence spans 110 residues: UPF0122 protein lin1916 (110 aa).

The protein belongs to the UPF0122 family.

In terms of biological role, might take part in the signal recognition particle (SRP) pathway. This is inferred from the conservation of its genetic proximity to ftsY/ffh. May be a regulatory protein. The protein is UPF0122 protein lin1916 of Listeria innocua serovar 6a (strain ATCC BAA-680 / CLIP 11262).